Consider the following 547-residue polypeptide: Regulator of G-protein signaling 14 (547 aa).

The segment at 19-59 (VSDGELTSTAGSQAQGEGRGSSLSIHSLPSGPSSPFSTEEQ) is disordered. Phosphoserine is present on residues S20, S42, S45, S143, S199, S203, and S218. The segment covering 23 to 58 (ELTSTAGSQAQGEGRGSSLSIHSLPSGPSSPFSTEE) has biased composition (polar residues). An RGS domain is found at 67–184 (SFERLLQDPR…VKSPLYQECL (118 aa)). The disordered stretch occupies residues 191–220 (RPLREPGSSHLGSPDTARKKPKLKPGKSLP). Residue T249 is modified to Phosphothreonine. S289 carries the post-translational modification Phosphoserine. The segment at 300 to 427 (RPGKYCCVYL…LHRPGEKQPM (128 aa)) is necessary for interaction with RABGEF1. RBD domains lie at 303 to 374 (KYCC…LENR) and 376 to 446 (TFQL…LDTP). The disordered stretch occupies residues 447–496 (PDAKMSEARSISPCRSQGCLPRTQTKDSHLPPSSSSLLVEDASSSTGNRQ). A compositionally biased stretch (low complexity) spans 476-491 (LPPSSSSLLVEDASSS). Residues 500–522 (IEGLVELLNRVQSSGAHDQRGLL) enclose the GoLoco domain.

In terms of assembly, interacts with GNAI1 and GNAI2. Interacts with GNAI3. Interacts with GNAO1. Interacts (via RGS and GoLoco domains) with GNAI1; the interaction occurs in the centrosomes. Interaction with GNAI1 or GNAI3 (via active GTP- or inactive GDP-bound forms) prevents association of RGS14 with centrosomes or nuclear localization. Interacts with RABGEF1; the interactions is GTP-dependent. Interacts with RAP2A; the interactions is GTP-dependent and does not alter its function on G(i) alpha subunits either as GAP or as GDI. Associates with microtubules. Found in a complex with at least BRAF, HRAS, MAP2K1, MAPK3 and RGS14. Interacts with RIC8A (via C-terminus). Interacts (via RBD 1 domain) with HRAS (active GTP-bound form preferentially). Interacts (via RBD domains) with BRAF (via N-terminus); the interaction mediates the formation of a ternary complex with RAF1. Interacts (via RBD domains) with RAF1 (via N-terminus); the interaction mediates the formation of a ternary complex with BRAF. Interacts with KRAS (active GTP-bound form preferentially), MRAS (active GTP-bound form preferentially), NRAS (active GTP-bound form preferentially) and RRAS (active GTP-bound form preferentially). Post-translationally, phosphorylated by PKC. Phosphorylation is increased in presence of forskolin and may enhance the GDI activity on G(i) alpha subunit GNAI1. In terms of tissue distribution, expressed in pyramidal neurons of the CA1, CA2 and fasciola cinerea (FC) subregions of the hippocampus and in the olfactory cortex (at protein level). Expressed in brain, spleen, heart, liver, lung, kidney, skin and thymus (at protein level). Expressed in granular layer of the cerebellum, forbrain, striatum, layer V of the cortex, olfactory cortex, tubercules, subthalamic and hippocampus, particularly in the CA2 region, to a lesser extent in the CA1 region and the external layer of the dentate gyrus. Expressed in neurons.

It is found in the nucleus. The protein resides in the PML body. It localises to the cytoplasm. Its subcellular location is the membrane. The protein localises to the cell membrane. It is found in the cytoskeleton. The protein resides in the spindle. It localises to the spindle pole. Its subcellular location is the microtubule organizing center. The protein localises to the centrosome. It is found in the cell projection. The protein resides in the dendrite. It localises to the dendritic spine. Its subcellular location is the postsynaptic density. Functionally, regulates G protein-coupled receptor signaling cascades. Inhibits signal transduction by increasing the GTPase activity of G protein alpha subunits, thereby driving them into their inactive GDP-bound form. Besides, modulates signal transduction via G protein alpha subunits by functioning as a GDP-dissociation inhibitor (GDI). Has GDI activity on G(i) alpha subunits GNAI1 and GNAI3, but not on GNAI2 and G(o)-alpha subunit GNAO1. Has GAP activity on GNAI0, GNAI2 and GNAI3. May act as a scaffold integrating G protein and Ras/Raf MAPkinase signaling pathways. Inhibits platelet-derived growth factor (PDGF)-stimulated ERK1/ERK2 phosphorylation; a process depending on its interaction with HRAS and that is reversed by G(i) alpha subunit GNAI1. Acts as a positive modulator of microtubule polymerisation and spindle organization through a G(i)-alpha-dependent mechanism. Plays a role in cell division; required for completion of the first mitotic division of the embryo. Involved in visual memory processing capacity; when overexpressed in the V2 secondary visual cortex area. Involved in hippocampal-based learning and memory; acts as a suppressor of synaptic plasticity in CA2 neurons. Required for the nerve growth factor (NGF)-mediated neurite outgrowth. Involved in stress resistance. The protein is Regulator of G-protein signaling 14 (Rgs14) of Mus musculus (Mouse).